The following is a 346-amino-acid chain: Holliday junction branch migration complex subunit RuvB (346 aa).

Residues 4–185 form a large ATPase domain (RuvB-L) region; sequence SDRIITASPF…FGIVSRLEFY (182 aa). Residues Leu-24, Arg-25, Gly-66, Lys-69, Thr-70, Thr-71, 132-134, Arg-175, Tyr-185, and Arg-222 each bind ATP; that span reads EDY. A Mg(2+)-binding site is contributed by Thr-70. The small ATPAse domain (RuvB-S) stretch occupies residues 186-256; sequence TSDELSKIVT…VADAALQMLD (71 aa). Residues 259 to 346 are head domain (RuvB-H); it reads AAGLDVLDRK…AATPGLFNPD (88 aa). Residues Arg-295, Arg-314, and Arg-319 each contribute to the DNA site.

This sequence belongs to the RuvB family. As to quaternary structure, homohexamer. Forms an RuvA(8)-RuvB(12)-Holliday junction (HJ) complex. HJ DNA is sandwiched between 2 RuvA tetramers; dsDNA enters through RuvA and exits via RuvB. An RuvB hexamer assembles on each DNA strand where it exits the tetramer. Each RuvB hexamer is contacted by two RuvA subunits (via domain III) on 2 adjacent RuvB subunits; this complex drives branch migration. In the full resolvosome a probable DNA-RuvA(4)-RuvB(12)-RuvC(2) complex forms which resolves the HJ.

It localises to the cytoplasm. The catalysed reaction is ATP + H2O = ADP + phosphate + H(+). The RuvA-RuvB-RuvC complex processes Holliday junction (HJ) DNA during genetic recombination and DNA repair, while the RuvA-RuvB complex plays an important role in the rescue of blocked DNA replication forks via replication fork reversal (RFR). RuvA specifically binds to HJ cruciform DNA, conferring on it an open structure. The RuvB hexamer acts as an ATP-dependent pump, pulling dsDNA into and through the RuvAB complex. RuvB forms 2 homohexamers on either side of HJ DNA bound by 1 or 2 RuvA tetramers; 4 subunits per hexamer contact DNA at a time. Coordinated motions by a converter formed by DNA-disengaged RuvB subunits stimulates ATP hydrolysis and nucleotide exchange. Immobilization of the converter enables RuvB to convert the ATP-contained energy into a lever motion, pulling 2 nucleotides of DNA out of the RuvA tetramer per ATP hydrolyzed, thus driving DNA branch migration. The RuvB motors rotate together with the DNA substrate, which together with the progressing nucleotide cycle form the mechanistic basis for DNA recombination by continuous HJ branch migration. Branch migration allows RuvC to scan DNA until it finds its consensus sequence, where it cleaves and resolves cruciform DNA. The polypeptide is Holliday junction branch migration complex subunit RuvB (Nitrosomonas eutropha (strain DSM 101675 / C91 / Nm57)).